We begin with the raw amino-acid sequence, 81 residues long: Photosystem I iron-sulfur center (81 aa).

2 4Fe-4S ferredoxin-type domains span residues 2 to 31 (SHSV…MVPW) and 39 to 68 (IASS…IRVY). Positions 11, 14, 17, 21, 48, 51, 54, and 58 each coordinate [4Fe-4S] cluster.

As to quaternary structure, the G.violaceus PSI reaction center is composed of one copy each of PsaA,B,C,D,E,F,L,M and Z, and forms trimeric complexes. [4Fe-4S] cluster serves as cofactor.

It localises to the cell inner membrane. The enzyme catalyses reduced [plastocyanin] + hnu + oxidized [2Fe-2S]-[ferredoxin] = oxidized [plastocyanin] + reduced [2Fe-2S]-[ferredoxin]. Functionally, apoprotein for the two 4Fe-4S centers FA and FB of photosystem I (PSI); essential for photochemical activity. FB is the terminal electron acceptor of PSI, donating electrons to ferredoxin. The C-terminus interacts with PsaA/B/D and helps assemble the protein into the PSI complex. Required for binding of PsaD and PsaE to PSI. PSI is a plastocyanin/cytochrome c6-ferredoxin oxidoreductase, converting photonic excitation into a charge separation, which transfers an electron from the donor P700 chlorophyll pair to the spectroscopically characterized acceptors A0, A1, FX, FA and FB in turn. The protein is Photosystem I iron-sulfur center of Gloeobacter violaceus (strain ATCC 29082 / PCC 7421).